The chain runs to 701 residues: DNA ligase A (701 aa).

The interval 1–23 (MSEKATGEVEAELPEHPDADERR) is disordered. Residues 49–53 (DAEFD), 99–100 (SL), and Glu129 each bind NAD(+). The active-site N6-AMP-lysine intermediate is Lys131. NAD(+) contacts are provided by Arg152, Glu192, Lys308, and Lys332. Zn(2+) contacts are provided by Cys426, Cys429, Cys445, and Cys451. The BRCT domain occupies 615–701 (SIERTLEGLS…EQGPPVEPAE (87 aa)).

It belongs to the NAD-dependent DNA ligase family. LigA subfamily. It depends on Mg(2+) as a cofactor. Mn(2+) serves as cofactor.

It catalyses the reaction NAD(+) + (deoxyribonucleotide)n-3'-hydroxyl + 5'-phospho-(deoxyribonucleotide)m = (deoxyribonucleotide)n+m + AMP + beta-nicotinamide D-nucleotide.. Functionally, DNA ligase that catalyzes the formation of phosphodiester linkages between 5'-phosphoryl and 3'-hydroxyl groups in double-stranded DNA using NAD as a coenzyme and as the energy source for the reaction. It is essential for DNA replication and repair of damaged DNA. Probably the only ligase required for non-homologous end joining (NHEJ) repair of 3-overhangs. This Mycolicibacterium smegmatis (strain ATCC 700084 / mc(2)155) (Mycobacterium smegmatis) protein is DNA ligase A.